The primary structure comprises 326 residues: Protoheme IX farnesyltransferase (326 aa).

8 consecutive transmembrane segments (helical) span residues Leu-35–Leu-55, Leu-60–Leu-80, Thr-106–Val-126, Leu-129–Leu-149, Ile-157–Gly-177, Trp-185–Leu-205, Val-238–Met-258, and Trp-289–Ala-309.

The protein belongs to the UbiA prenyltransferase family. Protoheme IX farnesyltransferase subfamily.

Its subcellular location is the cell inner membrane. It catalyses the reaction heme b + (2E,6E)-farnesyl diphosphate + H2O = Fe(II)-heme o + diphosphate. It functions in the pathway porphyrin-containing compound metabolism; heme O biosynthesis; heme O from protoheme: step 1/1. Functionally, converts heme B (protoheme IX) to heme O by substitution of the vinyl group on carbon 2 of heme B porphyrin ring with a hydroxyethyl farnesyl side group. The chain is Protoheme IX farnesyltransferase from Synechococcus sp. (strain CC9902).